The primary structure comprises 226 residues: MKAIKIAIDGPASSGKSTVAKIIAKNLGYTYLDTGAMYRSATYIALTHGYTGKEVALILEELEKNPISFKKAKDGSQLVFLGDEDVTLAIRQNDVTNNVSWVSALPEIREELVHQQRRIAQAGGIIMDGRDIGTVVLPDAELKIFLVASVEERAERRYKENLEKGIESDFETLKEEIAARDYKDSHRKVSPLKAAEDALIFDTTGVSIDGVVQFIQEKAEKIVDMS.

Residue 10–18 (GPASSGKST) coordinates ATP.

Belongs to the cytidylate kinase family. Type 1 subfamily.

Its subcellular location is the cytoplasm. The catalysed reaction is CMP + ATP = CDP + ADP. It catalyses the reaction dCMP + ATP = dCDP + ADP. The chain is Cytidylate kinase from Streptococcus pyogenes serotype M28 (strain MGAS6180).